Reading from the N-terminus, the 659-residue chain is MVAAAISTTDPRNPPRDRPQSLTNNGGQRRPRGKQVPSRYLSPSPSHSVSSTTTTTTTTTTTTSSSSSSSSSAILRTSKRYPSPSPLLSRSTTNSASNSIKTPSLLPKRSQSVDRRRPSAVSVTVGTEMSAATKMLITSTRSLSVSFQGEAFSLPISKKKETTSTPVSHRKSTPERRRSTPVRDQRENSKPVDQQRWPGASRRGNSESVVPNSLSRSLDCGSDRGKLGSGFVGRSMLHNSMIDESPRVSVNGRLSLDLGGRDEYLDIGDDIQRRPNNGLTSSVSCDFTASDTDSVSSGSTNGVQECGSGVNGEISKSKSLPRNIMASARFWQETNSRLRRLQDPGSPLSSSPGLKTSSISSKFGLSKRFSSDAVPLSSPRGMASPVRGSAIRSASPSKLWATTTSSPARALSSPSRARNGVSDQMNAYNRNNTPSILSFSADIRRGKIGEDRVMDAHLLRLLYNRDLQWRFVNARADSTVMVQRLNAEKNLWNAWVSISELRHSVTLKRIKLLLLRQKLKLASILRGQMGFLEEWSLLDRDHSSSLSGATESLKASTLRLPIVGKTVVDIQDLKHAVSSAVDVMQAMSSSIFSLTSKVDEMNSVMVETVNVTAKEKVLLERCQGCLSRVAAMQVTDCSMKTHIIQLSRIPITSSLTPQL.

5 disordered regions span residues 1–125, 157–221, 291–317, 340–359, and 371–429; these read MVAA…SVTV, SKKK…LDCG, DTDS…ISKS, RLQD…TSSI, and SDAV…NAYN. The span at 42–72 shows a compositional bias: low complexity; the sequence is SPSPSHSVSSTTTTTTTTTTTTSSSSSSSSS. Positions 90–102 are enriched in polar residues; sequence RSTTNSASNSIKT. Basic and acidic residues predominate over residues 172-190; sequence STPERRRSTPVRDQRENSK. Polar residues-rich tracts occupy residues 206–216 and 291–303; these read SESVVPNSLSR and DTDS…TNGV. Low complexity-rich tracts occupy residues 345–359 and 401–418; these read GSPL…TSSI and ATTT…SRAR. The short motif at 468–471 is the QWRF motif element; it reads QWRF.

It belongs to the QWRF family.

In Arabidopsis thaliana (Mouse-ear cress), this protein is QWRF motif-containing protein 2 (QWRF2).